The following is a 255-amino-acid chain: MAELRVLVAVKRVIDYAVKIRVKPDRTGVVTDGVKHSMNPFCEIAVEEAVRLKEKKLVKEVIAVSCGPAQCQETIRTALAMGADRGIHVEVPPAEAERLGPLQVARVLAKLAEKEKVDLVLLGKQAIDDDCNQTGQMTAGFLDWPQGTFASQVTLEGDKLKVEREIDGGLETLRLKLPAVVTADLRLNEPRYATLPNIMKAKKKKIEVIKPGDLGVDLTSKLSVISVEDPPQRTAGVKVETTEDLVAKLKEIGRI.

Ala2 is modified (N-acetylalanine). AMP-binding positions include Ala9, 39–42 (NPFC), Cys66, and 123–134 (GKQAIDDDCNQT). Positions 183–205 (ADLRLNEPRYATLPNIMKAKKKK) are recognition loop. Lys200 bears the N6,N6,N6-trimethyllysine; by ETFBKMT; alternate mark. Lys200 is subject to N6-acetyllysine; alternate. Lys200 carries the N6-methyllysine; alternate modification. Lys203 bears the N6,N6,N6-trimethyllysine; by ETFBKMT mark. Lys210 is modified (N6-acetyllysine; alternate). At Lys210 the chain carries N6-succinyllysine; alternate. Ser223 and Ser226 each carry phosphoserine. N6-acetyllysine is present on Lys238. N6-acetyllysine; alternate is present on Lys248. The residue at position 248 (Lys248) is an N6-succinyllysine; alternate.

It belongs to the ETF beta-subunit/FixA family. As to quaternary structure, heterodimer composed of ETFA and ETFB. Identified in a complex that contains ETFA, ETFB and ETFRF1. Interacts with ACADM. Methylated. Trimethylation at Lys-200 and Lys-203 may negatively regulate the activity in electron transfer from acyl-CoA dehydrogenases. As to expression, abundant in liver, heart and skeletal muscle. A weak expression is seen in the brain, placenta, lung, kidney and pancreas.

The protein localises to the mitochondrion matrix. Heterodimeric electron transfer flavoprotein that accepts electrons from several mitochondrial dehydrogenases, including acyl-CoA dehydrogenases, glutaryl-CoA and sarcosine dehydrogenase. It transfers the electrons to the main mitochondrial respiratory chain via ETF-ubiquinone oxidoreductase. Required for normal mitochondrial fatty acid oxidation and normal amino acid metabolism. ETFB binds an AMP molecule that probably has a purely structural role. This is Electron transfer flavoprotein subunit beta from Homo sapiens (Human).